A 401-amino-acid chain; its full sequence is Phosphoglycerate kinase (401 aa).

Residues 26–28 (DLN), R41, 64–67 (HLGR), R123, and R156 contribute to the substrate site. ATP-binding positions include K207, G298, E329, and 355–358 (GGDS).

It belongs to the phosphoglycerate kinase family. In terms of assembly, monomer.

The protein resides in the cytoplasm. It carries out the reaction (2R)-3-phosphoglycerate + ATP = (2R)-3-phospho-glyceroyl phosphate + ADP. It participates in carbohydrate degradation; glycolysis; pyruvate from D-glyceraldehyde 3-phosphate: step 2/5. The protein is Phosphoglycerate kinase of Bdellovibrio bacteriovorus (strain ATCC 15356 / DSM 50701 / NCIMB 9529 / HD100).